The chain runs to 505 residues: ATP synthase subunit alpha (505 aa).

Position 170-177 (170-177 (GDRQTGKT)) interacts with ATP.

This sequence belongs to the ATPase alpha/beta chains family. In terms of assembly, F-type ATPases have 2 components, CF(1) - the catalytic core - and CF(0) - the membrane proton channel. CF(1) has five subunits: alpha(3), beta(3), gamma(1), delta(1), epsilon(1). CF(0) has four main subunits: a(1), b(1), b'(1) and c(9-12).

The protein resides in the cellular thylakoid membrane. It carries out the reaction ATP + H2O + 4 H(+)(in) = ADP + phosphate + 5 H(+)(out). Its function is as follows. Produces ATP from ADP in the presence of a proton gradient across the membrane. The alpha chain is a regulatory subunit. The protein is ATP synthase subunit alpha of Prochlorococcus marinus (strain MIT 9313).